The following is a 472-amino-acid chain: Ribulose bisphosphate carboxylase/oxygenase activase, chloroplastic (472 aa).

Residues 1–58 (MATAVSTVGAATRAPLNLNGSSAGASVPTSGFLGSSLKKHTNVRFPSSSRTTSMTVKA) constitute a chloroplast transit peptide. 163 to 170 (GGKGQGKS) provides a ligand contact to ATP. The interval 448–472 (GCTDPEAKNYDPTARSDDGSCTYNL) is disordered. A compositionally biased stretch (basic and acidic residues) spans 452 to 465 (PEAKNYDPTARSDD).

This sequence belongs to the RuBisCO activase family.

It localises to the plastid. The protein localises to the chloroplast stroma. Its function is as follows. Activation of RuBisCO (ribulose-1,5-bisphosphate carboxylase/oxygenase; EC 4.1.1.39) involves the ATP-dependent carboxylation of the epsilon-amino group of lysine leading to a carbamate structure. In Spinacia oleracea (Spinach), this protein is Ribulose bisphosphate carboxylase/oxygenase activase, chloroplastic.